The primary structure comprises 158 residues: SsrA-binding protein (158 aa).

The protein belongs to the SmpB family.

The protein localises to the cytoplasm. Required for rescue of stalled ribosomes mediated by trans-translation. Binds to transfer-messenger RNA (tmRNA), required for stable association of tmRNA with ribosomes. tmRNA and SmpB together mimic tRNA shape, replacing the anticodon stem-loop with SmpB. tmRNA is encoded by the ssrA gene; the 2 termini fold to resemble tRNA(Ala) and it encodes a 'tag peptide', a short internal open reading frame. During trans-translation Ala-aminoacylated tmRNA acts like a tRNA, entering the A-site of stalled ribosomes, displacing the stalled mRNA. The ribosome then switches to translate the ORF on the tmRNA; the nascent peptide is terminated with the 'tag peptide' encoded by the tmRNA and targeted for degradation. The ribosome is freed to recommence translation, which seems to be the essential function of trans-translation. The chain is SsrA-binding protein from Caldicellulosiruptor bescii (strain ATCC BAA-1888 / DSM 6725 / KCTC 15123 / Z-1320) (Anaerocellum thermophilum).